The chain runs to 250 residues: Manganese transport system ATP-binding protein MntB (250 aa).

The ABC transporter domain occupies 4 to 236; sequence VELDNVTVAY…NLQKTYGGRL (233 aa). 36–43 contacts ATP; sequence GPNGAGKS.

This sequence belongs to the ABC transporter superfamily. In terms of assembly, the complex is probably composed of two ATP-binding proteins (MntB), two transmembrane proteins (MntC and MntD) and a solute-binding protein (MntA).

It is found in the cell membrane. Probably part of the ABC transporter complex MntABCD involved in manganese import. Probably responsible for energy coupling to the transport system. In Bacillus subtilis (strain 168), this protein is Manganese transport system ATP-binding protein MntB.